The chain runs to 487 residues: MTFTASQLLALLPLLLTTGAMVALMLAIAWKRCDDTAFVVTIAGLNLALFSLPIVMAQGDQGVTPLLQIDGYAVFYMGLVLIGALATCTFGRSWLKGYPDNREEFYLLLLIATAGGLVLAGSRHLASLFIGIEMLTLPMFGLVGYAYRERHSLEASIKYMVLSAAATAFLLFGMALLYAQAGSLSFSDLGLTLATTPAHHPLLMGGLGLMLVGFAFKLSLAPFHLWTPDVYEGAPAPVATFLATVSKIAVFCVLLRFYLAVPAAADPMIHWLLAAMAVISIVIGNLLALLQTNIKRMMGYSSISHFGYLLAVIVASRLGQMPVEAAGVYLLMYLFTSLGAFGVISMMSSPYRGKDADSLHSYRGLFWRRPYLTAVLTVMMLSLAGIPMTLGFIGKFYLIGVTVDAKLWWLSGAIVLGSALGLYYYLRVMVTLYLREPGMQLRDAKGDWAITSGGLVVLLSAALVVALGLYPQPVISLVQGFQNVVLH.

14 helical membrane passes run 8 to 28 (LLAL…MLAI), 37 to 57 (AFVV…IVMA), 71 to 91 (GYAV…CTFG), 104 to 124 (EFYL…GSRH), 125 to 145 (LASL…LVGY), 159 to 179 (YMVL…LLYA), 203 to 223 (LMGG…LAPF), 235 to 255 (PAPV…CVLL), 269 to 289 (IHWL…LLAL), 303 to 323 (ISHF…QMPV), 327 to 347 (GVYL…ISMM), 374 to 394 (AVLT…GFIG), 408 to 427 (WWLS…YYLR), and 449 to 469 (AITS…ALGL).

The protein belongs to the complex I subunit 2 family. As to quaternary structure, NDH-1 is composed of 14 different subunits. Subunits NuoA, H, J, K, L, M, N constitute the membrane sector of the complex.

It localises to the cell inner membrane. It carries out the reaction a quinone + NADH + 5 H(+)(in) = a quinol + NAD(+) + 4 H(+)(out). In terms of biological role, NDH-1 shuttles electrons from NADH, via FMN and iron-sulfur (Fe-S) centers, to quinones in the respiratory chain. The immediate electron acceptor for the enzyme in this species is believed to be ubiquinone. Couples the redox reaction to proton translocation (for every two electrons transferred, four hydrogen ions are translocated across the cytoplasmic membrane), and thus conserves the redox energy in a proton gradient. This is NADH-quinone oxidoreductase subunit N from Aeromonas hydrophila subsp. hydrophila (strain ATCC 7966 / DSM 30187 / BCRC 13018 / CCUG 14551 / JCM 1027 / KCTC 2358 / NCIMB 9240 / NCTC 8049).